The sequence spans 288 residues: ATP phosphoribosyltransferase (288 aa).

It belongs to the ATP phosphoribosyltransferase family. Long subfamily. The cofactor is Mg(2+).

Its subcellular location is the cytoplasm. It catalyses the reaction 1-(5-phospho-beta-D-ribosyl)-ATP + diphosphate = 5-phospho-alpha-D-ribose 1-diphosphate + ATP. It participates in amino-acid biosynthesis; L-histidine biosynthesis; L-histidine from 5-phospho-alpha-D-ribose 1-diphosphate: step 1/9. With respect to regulation, feedback inhibited by histidine. Catalyzes the condensation of ATP and 5-phosphoribose 1-diphosphate to form N'-(5'-phosphoribosyl)-ATP (PR-ATP). Has a crucial role in the pathway because the rate of histidine biosynthesis seems to be controlled primarily by regulation of HisG enzymatic activity. In Methanococcus maripaludis (strain C6 / ATCC BAA-1332), this protein is ATP phosphoribosyltransferase.